The chain runs to 89 residues: Small ribosomal subunit protein uS15 (89 aa).

The protein belongs to the universal ribosomal protein uS15 family. Part of the 30S ribosomal subunit. Forms a bridge to the 50S subunit in the 70S ribosome, contacting the 23S rRNA.

Functionally, one of the primary rRNA binding proteins, it binds directly to 16S rRNA where it helps nucleate assembly of the platform of the 30S subunit by binding and bridging several RNA helices of the 16S rRNA. Its function is as follows. Forms an intersubunit bridge (bridge B4) with the 23S rRNA of the 50S subunit in the ribosome. This Shewanella woodyi (strain ATCC 51908 / MS32) protein is Small ribosomal subunit protein uS15.